The sequence spans 359 residues: Glutamate 5-kinase (359 aa).

Lys-7 serves as a coordination point for ATP. 3 residues coordinate substrate: Ser-47, Asp-135, and Asn-147. ATP is bound at residue 202–208 (SGGITSK). The 78-residue stretch at 266-343 (KGSIFINEGA…DQLEDVLGYS (78 aa)) folds into the PUA domain.

The protein belongs to the glutamate 5-kinase family.

The protein resides in the cytoplasm. It catalyses the reaction L-glutamate + ATP = L-glutamyl 5-phosphate + ADP. It participates in amino-acid biosynthesis; L-proline biosynthesis; L-glutamate 5-semialdehyde from L-glutamate: step 1/2. Functionally, catalyzes the transfer of a phosphate group to glutamate to form L-glutamate 5-phosphate. This is Glutamate 5-kinase from Kosmotoga olearia (strain ATCC BAA-1733 / DSM 21960 / TBF 19.5.1).